The sequence spans 297 residues: MSKRKLSGSAVALVTPFRQDMSVDREAIRRLVHFHIAAGTDILIPCGTTGESPTLTADEQTEIIEIVREEAGNKMLVAAGAGTNATEEAVSLASNAQKAGAQALLSVAPYYNKPSQEGYYQHYRRIAEAVSIPVIVYNVPGRTGSNVHAETILRLAHDCENIAAVKEASDNMAQIMELLASRPDDFSVMTGEDSLILPFMALGGDGVISVAANLLPAEVKQLVTEMHEGDLEKARVIHNRLRRLFSLNFIESNPVPVKYSLSLMGMIEEVYRLPLVALQPENKEKIKEELRNLGLVS.

Position 49 (T49) interacts with pyruvate. Y137 functions as the Proton donor/acceptor in the catalytic mechanism. K166 serves as the catalytic Schiff-base intermediate with substrate. Residue I208 coordinates pyruvate.

The protein belongs to the DapA family. Homotetramer; dimer of dimers.

The protein resides in the cytoplasm. It catalyses the reaction L-aspartate 4-semialdehyde + pyruvate = (2S,4S)-4-hydroxy-2,3,4,5-tetrahydrodipicolinate + H2O + H(+). Its pathway is amino-acid biosynthesis; L-lysine biosynthesis via DAP pathway; (S)-tetrahydrodipicolinate from L-aspartate: step 3/4. Catalyzes the condensation of (S)-aspartate-beta-semialdehyde [(S)-ASA] and pyruvate to 4-hydroxy-tetrahydrodipicolinate (HTPA). The polypeptide is 4-hydroxy-tetrahydrodipicolinate synthase (Chlorobium phaeobacteroides (strain BS1)).